We begin with the raw amino-acid sequence, 601 residues long: Zinc finger CCCH domain-containing protein 33 (601 aa).

ANK repeat units follow at residues 71-101 (ERRT…EAAR) and 106-138 (DGAT…SVDA). The segment covering 167–180 (PAVSPSSSPKKSAS) has biased composition (low complexity). The disordered stretch occupies residues 167 to 203 (PAVSPSSSPKKSASPPSPPPPQEAKKEYPPDLTLPDL). 2 consecutive C3H1-type zinc fingers follow at residues 252–280 (SYSC…HGVF) and 288–312 (QYRT…HKPD).

The sequence is that of Zinc finger CCCH domain-containing protein 33 from Oryza sativa subsp. japonica (Rice).